The primary structure comprises 236 residues: UPF0502 protein Bxeno_B1639 (236 aa).

Belongs to the UPF0502 family.

The protein is UPF0502 protein Bxeno_B1639 of Paraburkholderia xenovorans (strain LB400).